We begin with the raw amino-acid sequence, 222 residues long: Germin-like protein subfamily 1 member 5 (222 aa).

Residues 1–24 (MKGLLHFLLAKIILLALASSFVYC) form the signal peptide. Residues C34 and C50 are joined by a disulfide bond. 2 N-linked (GlcNAc...) asparagine glycosylation sites follow: N38 and N71. One can recognise a Cupin type-1 domain in the interval 64 to 215 (SGLNVPGNTS…AFALDFNKVK (152 aa)). Mn(2+) is bound by residues H112, H114, and E119. A glycan (N-linked (GlcNAc...) asparagine) is linked at N139. H163 lines the Mn(2+) pocket.

The protein belongs to the germin family. In terms of assembly, oligomer (believed to be a pentamer but probably hexamer).

The protein localises to the secreted. It is found in the extracellular space. Its subcellular location is the apoplast. Functionally, may play a role in plant defense. Probably has no oxalate oxidase activity even if the active site is conserved. The sequence is that of Germin-like protein subfamily 1 member 5 from Arabidopsis thaliana (Mouse-ear cress).